A 273-amino-acid polypeptide reads, in one-letter code: Ribosomal RNA small subunit methyltransferase I (273 aa).

This sequence belongs to the methyltransferase superfamily. RsmI family.

The protein localises to the cytoplasm. The enzyme catalyses cytidine(1402) in 16S rRNA + S-adenosyl-L-methionine = 2'-O-methylcytidine(1402) in 16S rRNA + S-adenosyl-L-homocysteine + H(+). Its function is as follows. Catalyzes the 2'-O-methylation of the ribose of cytidine 1402 (C1402) in 16S rRNA. This Xylella fastidiosa (strain Temecula1 / ATCC 700964) protein is Ribosomal RNA small subunit methyltransferase I.